A 589-amino-acid polypeptide reads, in one-letter code: MTISSAHPETEPKWWKEATIYQIYPASFKDSNNDGWGDMKGIASKLEYIKELGTDAIWISPFYDSPQDDMGYDIANYEKVWPTYGTNEDCFALIEKTHKLGMKFITDLVINHCSSEHEWFKESRSSKTNPKRDWFFWRPPKGYDAEGKPIPPNNWRSYFGGSAWTFDEKTQEFYLRLFCSTQPDLNWENEDCRKAIYESAVGYWLDHGVDGFRIDVGSLYSKVAGLPDAPVIDENSKWQLSDPFTMNGPRIHEFHQEMNKFIRNRVKDGREIMTVGEMRHATDETKRLYTSASRHELSELFNFSHTDVGTSPKFRQNLIPYELKDWKVALAELFRYVNGTDCWSTIYLENHDQPRSITRFGDDSPKNRVISGKLLSVLLVSLSGTLYVYQGQELGEINFKNWPIEKYEDVEVRNNYDAIKEEHGENSKEMKRFLEAIALISRDHARTPMQWSREEPNAGFSGPNAKPWFYLNESFREGINAEDESKDPNSVLNFWKEALRFRKAHKDITVYGYDFEFIDLDNKKLFSFTKKYDNKTLFAALNFSSDSIDFTIPNNSSSFKLEFGNYPRSEVDASSRTLKPWEGRIYISE.

Catalysis depends on D215, which acts as the Nucleophile. E277 functions as the Proton donor in the catalytic mechanism.

The protein belongs to the glycosyl hydrolase 13 family.

It is found in the cytoplasm. It catalyses the reaction Hydrolysis of (1-&gt;6)-alpha-D-glucosidic linkages in some oligosaccharides produced from starch and glycogen by alpha-amylase, and in isomaltose.. In terms of biological role, alpha-glucosidase with broad substrate specificity for alpha-1,4- and alpha-1,6-glucosides. Not required for isomaltose utilization, but overexpression allows the IMA1 null mutant to grow on isomaltose. This Saccharomyces cerevisiae (strain ATCC 204508 / S288c) (Baker's yeast) protein is Oligo-1,6-glucosidase IMA3 (IMA3).